Reading from the N-terminus, the 175-residue chain is Translation initiation factor IF-3 (175 aa).

Belongs to the IF-3 family. Monomer.

The protein resides in the cytoplasm. In terms of biological role, IF-3 binds to the 30S ribosomal subunit and shifts the equilibrium between 70S ribosomes and their 50S and 30S subunits in favor of the free subunits, thus enhancing the availability of 30S subunits on which protein synthesis initiation begins. In Staphylococcus saprophyticus subsp. saprophyticus (strain ATCC 15305 / DSM 20229 / NCIMB 8711 / NCTC 7292 / S-41), this protein is Translation initiation factor IF-3.